The following is a 376-amino-acid chain: Succinate--CoA ligase [ADP-forming] subunit beta (376 aa).

The ATP-grasp domain occupies Lys-9 to Asp-237. Residues Lys-46, Gly-53–Gly-55, Val-95, and Glu-100 each bind ATP. Residues Asn-192 and Asp-206 each contribute to the Mg(2+) site. Substrate is bound by residues Asn-257 and Gly-314–Thr-316.

This sequence belongs to the succinate/malate CoA ligase beta subunit family. As to quaternary structure, heterotetramer of two alpha and two beta subunits. Mg(2+) is required as a cofactor.

It catalyses the reaction succinate + ATP + CoA = succinyl-CoA + ADP + phosphate. The catalysed reaction is GTP + succinate + CoA = succinyl-CoA + GDP + phosphate. Its pathway is carbohydrate metabolism; tricarboxylic acid cycle; succinate from succinyl-CoA (ligase route): step 1/1. Succinyl-CoA synthetase functions in the citric acid cycle (TCA), coupling the hydrolysis of succinyl-CoA to the synthesis of either ATP or GTP and thus represents the only step of substrate-level phosphorylation in the TCA. The beta subunit provides nucleotide specificity of the enzyme and binds the substrate succinate, while the binding sites for coenzyme A and phosphate are found in the alpha subunit. The polypeptide is Succinate--CoA ligase [ADP-forming] subunit beta (Bacteroides thetaiotaomicron (strain ATCC 29148 / DSM 2079 / JCM 5827 / CCUG 10774 / NCTC 10582 / VPI-5482 / E50)).